The primary structure comprises 31 residues: Cytochrome b6-f complex subunit 6 (31 aa).

A helical membrane pass occupies residues 4 to 26 (ITSYFGFLLTALTITSALFIGLS).

The protein belongs to the PetL family. In terms of assembly, the 4 large subunits of the cytochrome b6-f complex are cytochrome b6, subunit IV (17 kDa polypeptide, PetD), cytochrome f and the Rieske protein, while the 4 small subunits are PetG, PetL, PetM and PetN. The complex functions as a dimer.

It is found in the plastid. Its subcellular location is the chloroplast thylakoid membrane. Its function is as follows. Component of the cytochrome b6-f complex, which mediates electron transfer between photosystem II (PSII) and photosystem I (PSI), cyclic electron flow around PSI, and state transitions. PetL is important for photoautotrophic growth as well as for electron transfer efficiency and stability of the cytochrome b6-f complex. The sequence is that of Cytochrome b6-f complex subunit 6 from Lactuca sativa (Garden lettuce).